Consider the following 822-residue polypeptide: DNA gyrase subunit A (822 aa).

Residues 32–497 (LPDVRDGLKP…QVLSLEDEDL (466 aa)) enclose the Topo IIA-type catalytic domain. The O-(5'-phospho-DNA)-tyrosine intermediate role is filled by tyrosine 120. The short motif at 524 to 530 (QKRGGRG) is the GyrA-box element.

Belongs to the type II topoisomerase GyrA/ParC subunit family. In terms of assembly, heterotetramer, composed of two GyrA and two GyrB chains. In the heterotetramer, GyrA contains the active site tyrosine that forms a transient covalent intermediate with DNA, while GyrB binds cofactors and catalyzes ATP hydrolysis.

Its subcellular location is the cytoplasm. It carries out the reaction ATP-dependent breakage, passage and rejoining of double-stranded DNA.. In terms of biological role, a type II topoisomerase that negatively supercoils closed circular double-stranded (ds) DNA in an ATP-dependent manner to modulate DNA topology and maintain chromosomes in an underwound state. Negative supercoiling favors strand separation, and DNA replication, transcription, recombination and repair, all of which involve strand separation. Also able to catalyze the interconversion of other topological isomers of dsDNA rings, including catenanes and knotted rings. Type II topoisomerases break and join 2 DNA strands simultaneously in an ATP-dependent manner. In Streptococcus pneumoniae serotype 4 (strain ATCC BAA-334 / TIGR4), this protein is DNA gyrase subunit A.